The following is a 610-amino-acid chain: Peptidyl-prolyl cis-trans isomerase 9 (610 aa).

A Phosphoserine modification is found at Ser13. 3 WD repeats span residues Met45–Ile83, Ala88–Ile127, and Lys177–Asp216. Residues Leu453–Ile607 form the PPIase cyclophilin-type domain.

Belongs to the cyclophilin-type PPIase family.

The protein resides in the nucleus. The enzyme catalyses [protein]-peptidylproline (omega=180) = [protein]-peptidylproline (omega=0). PPIases accelerate the folding of proteins. It catalyzes the cis-trans isomerization of proline imidic peptide bonds in oligopeptides. This chain is Peptidyl-prolyl cis-trans isomerase 9 (cyp9), found in Schizosaccharomyces pombe (strain 972 / ATCC 24843) (Fission yeast).